The following is a 550-amino-acid chain: Kinase suppressor of Ras B (550 aa).

Composition is skewed to low complexity over residues 21–56 and 63–75; these read SFSSWRRSSTSGSISQSSRTTSKTTTSSSVTSSNPI and ATSSSSVLPSTSS. The segment at 21-87 is disordered; sequence SFSSWRRSST…PPPASAPPRI (67 aa). The Phorbol-ester/DAG-type zinc-finger motif lies at 90–145; that stretch reads YHKMVPSKSKFRQCDVCEHIFIFDFVRKQHLDDVYACNVCGIRVHKGCLDRVKNDC. The interval 172-196 is disordered; sequence TTASISKSLTTSPTCSTSTTMSPAG. The span at 177–193 shows a compositional bias: low complexity; it reads SKSLTTSPTCSTSTTMS. The region spanning 248-528 is the Protein kinase domain; the sequence is VDVMTKIGDG…FQQIVKRITV (281 aa). The tract at residues 530–550 is disordered; that stretch reads MPRKESNKQKRRSTAHENPLF.

Belongs to the protein kinase superfamily. TKL Ser/Thr protein kinase family. As to quaternary structure, interacts with ndk-1.

Functionally, probable inactive protein kinase which positively regulates Ras-mediated signaling probably acting at the level of let-60/ras or/and lin-45/raf. In the germline, regulates meiotic progression during oogenesis and mpk-1 (isoform b) phosphorylation. Plays a role in meiotic recombination events. Functions redundantly with ksr-1 in the Ras-mediated regulation of larval survival, the development of excretory canal, in determining vulval precursor cell fate during vulval induction and in mpk-1 phosphorylation in somatic cells. This chain is Kinase suppressor of Ras B, found in Caenorhabditis elegans.